Consider the following 528-residue polypeptide: Calcium-dependent protein kinase 4 (528 aa).

Polar residues predominate over residues M1–Q16. The tract at residues M1–S36 is disordered. G2 is lipidated: N-myristoyl glycine. The region spanning Y70–I328 is the Protein kinase domain. Residues L76–V84 and K99 contribute to the ATP site. D193 serves as the catalytic Proton acceptor. A J domain autoinhibitory motif motif is present at residues N350–Q358. Residues N350 to K386 are j domain. Positions K359–M368 match the J domain EF-hand interaction motif motif. EF-hand domains follow at residues D376–L411, A423–L458, L459–S494, and W498–Y528. The Ca(2+) site is built by D389, N391, D393, Q395, E400, D436, D438, N440, Y442, E447, D472, D474, S476, K478, E483, D506, N508, D510, E512, and E517.

Belongs to the protein kinase superfamily. Ser/Thr protein kinase family. CDPK subfamily. In terms of assembly, may interact with the pre-replication MCM complex prior male gametogenesis activation. Requires Mg(2+) as cofactor. Post-translationally, myristoylated; myristoylation may target it to different subcellular compartments. During male gametogenesis, myristoylation is required to initiate DNA replication but not for mitotic spindle assembly or axoneme activation. Not palmitoylated. In terms of processing, may be autophosphorylated on Thr-234 in vitro.

Its subcellular location is the cytoplasm. The protein localises to the membrane. The protein resides in the chromosome. It carries out the reaction L-seryl-[protein] + ATP = O-phospho-L-seryl-[protein] + ADP + H(+). The catalysed reaction is L-threonyl-[protein] + ATP = O-phospho-L-threonyl-[protein] + ADP + H(+). Activated by calcium. Upon calcium binding to the EF-hand domains, the C-terminus of the junction domain (J domain) undergoes a conformational change which results in the dissociation of the pseudo-substrate inhibitory motif from the catalytic domain. This, in turn, may facilitate the autophosphorylation of the activation loop at Thr-234, which leads to the kinase activation. Intracellular calcium increase is triggered by xanthurenic acid (XA), a small mosquito molecule that induces the differentiation of specialized transmission stages, the gametocytes, into male and female gametes. Activated by a decrease in temperature (20 degrees Celsius) and an increase in pH (7.6) occurring when the parasite is ingested by in the mosquito. Its function is as follows. Calcium-dependent protein kinase which acts as a sensor and effector of intracellular Ca(2+) levels probably in part downstream of cGMP-activated PKG kinase. Plays a central role in the host erythrocytes and hepatocytes infection cycles, sexual reproduction and mosquito transmission of the parasite. During the liver stage, involved in sporozoite motility and thus in sporozoite invasion of host hepatocytes, probably together with CDPK1 and CDPK5. Involved in merosome egress from host hepatocytes, probably together with CDPK5. During the asexual blood stage, involved in merozoite invasion of host erythrocytes and motility by stabilizing the inner membrane complex, a structure below the plasma membrane which acts as an anchor for the glidosome, an acto-myosin motor. Required for cell cycle progression in the male gametocyte. During male gametogenesis in the mosquito gut, required to initiate the first round of DNA replication, probably by facilitating the assembly of the pre-replicative MCM complex, to assemble the first mitotic spindle and, at the end of gametogenesis, to initiate axoneme motility, cytokinesis and subsequent exflagellation. For each of these steps, may phosphorylate SOC1, SOC2 and SOC3, respectively. Together with CDPK1, regulates ookinete gliding in the mosquito host midgut. In terms of biological role, during male gametogenesis in the mosquito gut, required to initiate the first round of DNA replication, probably by facilitating the assembly of the pre-replicative MCM complex, and to assemble the first mitotic spindle. At the end of male gametogenesis in the mosquito gut, required to initiate axoneme motility, cytokinesis and subsequent exflagellation. The sequence is that of Calcium-dependent protein kinase 4 from Plasmodium berghei (strain Anka).